The following is a 907-amino-acid chain: Phosphoenolpyruvate carboxylase (907 aa).

Active-site residues include H138 and K570.

It belongs to the PEPCase type 1 family. The cofactor is Mg(2+).

The catalysed reaction is oxaloacetate + phosphate = phosphoenolpyruvate + hydrogencarbonate. Forms oxaloacetate, a four-carbon dicarboxylic acid source for the tricarboxylic acid cycle. The sequence is that of Phosphoenolpyruvate carboxylase from Streptococcus mutans serotype c (strain ATCC 700610 / UA159).